A 301-amino-acid chain; its full sequence is Glucose-1-phosphate adenylyltransferase large subunit (301 aa).

Belongs to the bacterial/plant glucose-1-phosphate adenylyltransferase family. As to quaternary structure, heterotetramer.

It is found in the plastid. It localises to the chloroplast. Its subcellular location is the amyloplast. The enzyme catalyses alpha-D-glucose 1-phosphate + ATP + H(+) = ADP-alpha-D-glucose + diphosphate. Its pathway is glycan biosynthesis; starch biosynthesis. Insensitive to 3'phosphoglycerate and orthophosphate. Its function is as follows. This protein plays a role in synthesis of starch. It catalyzes the synthesis of the activated glycosyl donor, ADP-glucose from Glc-1-P and ATP. The chain is Glucose-1-phosphate adenylyltransferase large subunit (AGA.1) from Triticum aestivum (Wheat).